A 545-amino-acid polypeptide reads, in one-letter code: ATP synthase subunit alpha (545 aa).

172–179 lines the ATP pocket; sequence GDRKTGKT. A disordered region spans residues 511–545; it reads FQTTDGTPVINEPEARPLGDDEVTKSQITVSRKTQ. Basic and acidic residues predominate over residues 523 to 534; it reads PEARPLGDDEVT. Residues 535 to 545 show a composition bias toward polar residues; the sequence is KSQITVSRKTQ.

The protein belongs to the ATPase alpha/beta chains family. In terms of assembly, F-type ATPases have 2 components, CF(1) - the catalytic core - and CF(0) - the membrane proton channel. CF(1) has five subunits: alpha(3), beta(3), gamma(1), delta(1), epsilon(1). CF(0) has three main subunits: a(1), b(2) and c(9-12). The alpha and beta chains form an alternating ring which encloses part of the gamma chain. CF(1) is attached to CF(0) by a central stalk formed by the gamma and epsilon chains, while a peripheral stalk is formed by the delta and b chains.

It is found in the cell membrane. The enzyme catalyses ATP + H2O + 4 H(+)(in) = ADP + phosphate + 5 H(+)(out). In terms of biological role, produces ATP from ADP in the presence of a proton gradient across the membrane. The alpha chain is a regulatory subunit. The sequence is that of ATP synthase subunit alpha from Corynebacterium jeikeium (strain K411).